The primary structure comprises 411 residues: Potassium channel subfamily K member 3 (411 aa).

Residues 1–8 lie on the Cytoplasmic side of the membrane; the sequence is MKRQNVRT. A helical membrane pass occupies residues 9 to 29; the sequence is LALIVCTFTYLLVGAAVFDAL. Asn-53 carries an N-linked (GlcNAc...) asparagine glycan. The pore-forming intramembrane region spans 78-101; that stretch reads WRFAGSFYFAITVITTIGYGHAAP. Residues 108–128 traverse the membrane as a helical segment; the sequence is VFCMFYALLGIPLTLVMFQSL. Residues 129–158 lie on the Cytoplasmic side of the membrane; it reads GERINTFVRYLLHRAKRGLGMRHAEVSMAN. The helical transmembrane segment at 159–179 threads the bilayer; that stretch reads MVLIGFVSCISTLCIGAAAFS. The segment at residues 184 to 207 is an intramembrane region (pore-forming); sequence WTFFQAYYYCFITLTTIGFGDYVA. Residues 223–243 traverse the membrane as a helical segment; it reads FSFVYILTGLTVIGAFLNLVV. Residues 244-411 lie on the Cytoplasmic side of the membrane; that stretch reads LRFMTMNAED…RGLMKRRSSV (168 aa).

The protein belongs to the two pore domain potassium channel (TC 1.A.1.8) family. Homodimer. Heterodimer with KCNK1. Heterodimer with KCNK9. In terms of tissue distribution, strongest expression in heart. Moderate expression in lung and brain. Low levels in liver, kidney and skeletal muscle. Expressed in cerebellar granule cells (at protein level).

Its subcellular location is the cell membrane. The enzyme catalyses K(+)(in) = K(+)(out). The catalysed reaction is Na(+)(in) = Na(+)(out). Its activity is regulated as follows. Inhibited by extracellular acidification, muscarinic signaling, divalent metal cations Zn(2+) and Ba(2+), isoflurane, bupivacaine and phenytoin. Activated by protein kinase A. Ruthenium red resistant. Functionally, k(+) channel that conducts voltage-dependent outward rectifying currents upon membrane depolarization. Voltage sensing is coupled to K(+) electrochemical gradient in an 'ion flux gating' mode where outward but not inward ion flow opens the gate. Changes ion selectivity and becomes permeable to Na(+) ions in response to extracellular acidification. Protonation of the pH sensor His-98 stabilizes C-type inactivation conformation likely converting the channel from outward K(+)-conducting, to inward Na(+)-conducting to nonconductive state. Homo- and heterodimerizes to form functional channels with distinct regulatory and gating properties. Allows K(+) currents with fast-gating kinetics important for the repolarization and hyperpolarization phases of action potentials. In cerebellar granule cells, heteromeric KCNK3:KCNK9 channel may hyperpolarize the resting membrane potential to limit intrinsic neuronal excitability, but once the action potential threshold is reached, it may support high-frequency action potential firing and increased neuronal excitability. Dispensable for central chemosensory respiration i.e. breathing controlled by brainstem CO2/pH, it rather conducts pH-sensitive currents and controls the firing rate of serotonergic raphe neurons involved in potentiation of the respiratory chemoreflex. Additionally, imparts chemosensitivity to type 1 cells in carotid bodies which respond to a decrease in arterial oxygen pressure or an increase in carbon dioxide pressure or pH to initiate adaptive changes in pulmonary ventilation. In adrenal gland, contributes to the maintenance of a hyperpolarized resting membrane potential of aldosterone-producing cells at zona glomerulosa and limits aldosterone release as part of a regulatory mechanism that controls arterial blood pressure and electrolyte homeostasis. In brown adipocytes, mediates K(+) efflux that counteracts norepinephrine-induced membrane depolarization, limits Ca(2+) efflux and downstream cAMP and PKA signaling, ultimately attenuating lipid oxidation and adaptive thermogenesis. This is Potassium channel subfamily K member 3 from Rattus norvegicus (Rat).